Consider the following 677-residue polypeptide: Histidine ammonia-lyase (677 aa).

Positions 269 to 271 (CSG) form a cross-link, 5-imidazolinone (Cys-Gly). A 2,3-didehydroalanine (Ser) modification is found at Ser270.

The protein belongs to the PAL/histidase family. Contains an active site 4-methylidene-imidazol-5-one (MIO), which is formed autocatalytically by cyclization and dehydration of residues Cys-Ser-Gly.

It catalyses the reaction L-histidine = trans-urocanate + NH4(+). It functions in the pathway amino-acid degradation; L-histidine degradation into L-glutamate; N-formimidoyl-L-glutamate from L-histidine: step 1/3. This chain is Histidine ammonia-lyase, found in Caenorhabditis elegans.